The primary structure comprises 98 residues: NADH-ubiquinone oxidoreductase chain 4L (98 aa).

The next 3 helical transmembrane spans lie at methionine 1–threonine 21, valine 27–isoleucine 47, and isoleucine 61–isoleucine 81.

Belongs to the complex I subunit 4L family. As to quaternary structure, core subunit of respiratory chain NADH dehydrogenase (Complex I) which is composed of 45 different subunits.

The protein localises to the mitochondrion inner membrane. It catalyses the reaction a ubiquinone + NADH + 5 H(+)(in) = a ubiquinol + NAD(+) + 4 H(+)(out). Core subunit of the mitochondrial membrane respiratory chain NADH dehydrogenase (Complex I) which catalyzes electron transfer from NADH through the respiratory chain, using ubiquinone as an electron acceptor. Part of the enzyme membrane arm which is embedded in the lipid bilayer and involved in proton translocation. This chain is NADH-ubiquinone oxidoreductase chain 4L (MT-ND4L), found in Macaca nigra (Celebes black macaque).